The following is a 65-amino-acid chain: Large ribosomal subunit protein bL35 (65 aa).

Residues 1 to 26 (MPKIKTVRGAAKRFKKTASGGFKRKQ) are disordered. The segment covering 10 to 26 (AAKRFKKTASGGFKRKQ) has biased composition (basic residues).

This sequence belongs to the bacterial ribosomal protein bL35 family.

The polypeptide is Large ribosomal subunit protein bL35 (Actinobacillus succinogenes (strain ATCC 55618 / DSM 22257 / CCUG 43843 / 130Z)).